The chain runs to 173 residues: Small ribosomal subunit protein uS5 (173 aa).

The S5 DRBM domain maps to 17–80; the sequence is WQERVIQIRR…ADGKKQLIDV (64 aa).

The protein belongs to the universal ribosomal protein uS5 family. As to quaternary structure, part of the 30S ribosomal subunit. Contacts proteins S4 and S8.

Its function is as follows. With S4 and S12 plays an important role in translational accuracy. In terms of biological role, located at the back of the 30S subunit body where it stabilizes the conformation of the head with respect to the body. This chain is Small ribosomal subunit protein uS5, found in Rippkaea orientalis (strain PCC 8801 / RF-1) (Cyanothece sp. (strain PCC 8801)).